A 78-amino-acid polypeptide reads, in one-letter code: Large ribosomal subunit protein bL28 (78 aa).

A disordered region spans residues methionine 1–alanine 21.

The protein belongs to the bacterial ribosomal protein bL28 family.

The sequence is that of Large ribosomal subunit protein bL28 from Cellvibrio japonicus (strain Ueda107) (Pseudomonas fluorescens subsp. cellulosa).